The primary structure comprises 253 residues: MKPVIVKNVRIGEGNPKIVVPIVAPTAEDILAEATASQTLDCDLVEWRLDYYENVADFSDVCNLSQQVMERLGQKPLLLTFRTQKEGGEMAFSEENYFALYHELVKKGALDLLDIELFANPLAADTLIHEAKKAGIKIVLCNHDFQKTPSQEEIVARLRQMQMRQADICKIAVMPQDATDVLTLLSATNEMYTHYASVPIVTMSMGQLGMISRVTGQLFGSALTFGSAQQASAPGQLSVQVLRNYLKTFEQNK.

Residues 46–48 (EWR) and Arg82 each bind 3-dehydroquinate. His143 acts as the Proton donor/acceptor in catalysis. Lys170 serves as the catalytic Schiff-base intermediate with substrate. Arg213, Ser232, and Gln236 together coordinate 3-dehydroquinate.

It belongs to the type-I 3-dehydroquinase family. Homodimer.

The enzyme catalyses 3-dehydroquinate = 3-dehydroshikimate + H2O. It participates in metabolic intermediate biosynthesis; chorismate biosynthesis; chorismate from D-erythrose 4-phosphate and phosphoenolpyruvate: step 3/7. Its activity is regulated as follows. Inhibited by flavonoids such as datiscetin, naringenin, marein and phloretin. Functionally, involved in the third step of the chorismate pathway, which leads to the biosynthesis of aromatic amino acids (AroAA). Catalyzes the cis-dehydration of 3-dehydroquinate (DHQ) and introduces the first double bond of the aromatic ring to yield 3-dehydroshikimate. The reaction involves the formation of an imine intermediate between the keto group of 3-dehydroquinate and the epsilon-amino group of Lys-170 at the active site. This Enterococcus faecalis (strain ATCC 700802 / V583) protein is 3-dehydroquinate dehydratase.